The following is a 185-amino-acid chain: Large ribosomal subunit protein uL5 (185 aa).

This sequence belongs to the universal ribosomal protein uL5 family. As to quaternary structure, part of the 50S ribosomal subunit; part of the 5S rRNA/L5/L18/L25 subcomplex. Contacts the 5S rRNA and the P site tRNA. Forms a bridge to the 30S subunit in the 70S ribosome.

This is one of the proteins that bind and probably mediate the attachment of the 5S RNA into the large ribosomal subunit, where it forms part of the central protuberance. In the 70S ribosome it contacts protein S13 of the 30S subunit (bridge B1b), connecting the 2 subunits; this bridge is implicated in subunit movement. Contacts the P site tRNA; the 5S rRNA and some of its associated proteins might help stabilize positioning of ribosome-bound tRNAs. This is Large ribosomal subunit protein uL5 from Rhodopseudomonas palustris (strain BisB18).